A 180-amino-acid polypeptide reads, in one-letter code: NAD(P)H-quinone oxidoreductase subunit I, chloroplastic (180 aa).

2 4Fe-4S ferredoxin-type domains span residues Gly55–Arg84 and Leu95–Glu124. [4Fe-4S] cluster-binding residues include Cys64, Cys67, Cys70, Cys74, Cys104, Cys107, Cys110, and Cys114.

The protein belongs to the complex I 23 kDa subunit family. In terms of assembly, NDH is composed of at least 16 different subunits, 5 of which are encoded in the nucleus. It depends on [4Fe-4S] cluster as a cofactor.

The protein resides in the plastid. It is found in the chloroplast thylakoid membrane. It carries out the reaction a plastoquinone + NADH + (n+1) H(+)(in) = a plastoquinol + NAD(+) + n H(+)(out). The catalysed reaction is a plastoquinone + NADPH + (n+1) H(+)(in) = a plastoquinol + NADP(+) + n H(+)(out). NDH shuttles electrons from NAD(P)H:plastoquinone, via FMN and iron-sulfur (Fe-S) centers, to quinones in the photosynthetic chain and possibly in a chloroplast respiratory chain. The immediate electron acceptor for the enzyme in this species is believed to be plastoquinone. Couples the redox reaction to proton translocation, and thus conserves the redox energy in a proton gradient. The protein is NAD(P)H-quinone oxidoreductase subunit I, chloroplastic of Zea mays (Maize).